An 81-amino-acid polypeptide reads, in one-letter code: Costars family protein ABRACL (81 aa).

It belongs to the costars family.

This is Costars family protein ABRACL (abracl) from Danio rerio (Zebrafish).